The chain runs to 1296 residues: Histone-lysine N-methyltransferase EHMT1 (1296 aa).

2 disordered regions span residues 1-111 (MAAA…NHVT) and 170-200 (PQTP…TDVR). N-acetylalanine is present on alanine 2. Residues 14–31 (QETKQDCCMKTELLREDT) show a composition bias toward basic and acidic residues. Lysine 23 is covalently cross-linked (Glycyl lysine isopeptide (Lys-Gly) (interchain with G-Cter in SUMO1); alternate). Residue lysine 23 forms a Glycyl lysine isopeptide (Lys-Gly) (interchain with G-Cter in SUMO2); alternate linkage. The span at 77–89 (NTRASPQEGTNRV) shows a compositional bias: polar residues. The segment covering 97-106 (VSERDTEVGK) has biased composition (basic and acidic residues). Glycyl lysine isopeptide (Lys-Gly) (interchain with G-Cter in SUMO2) cross-links involve residues lysine 191, lysine 229, lysine 232, lysine 315, and lysine 325. Positions 341 to 470 (SLEMDSEDED…SSPGSMEQAA (130 aa)) are disordered. The segment covering 342–360 (LEMDSEDEDSDELEDDEDH) has biased composition (acidic residues). Basic and acidic residues predominate over residues 371-391 (EDSRTSKESMSETDRAAKMDG). Acidic residues predominate over residues 392-414 (DSEEEQESPDTGEDEDGGDESDL). Lysine 430 is covalently cross-linked (Glycyl lysine isopeptide (Lys-Gly) (interchain with G-Cter in SUMO2)). A Phosphoserine modification is found at serine 433. Positions 438–450 (PARKRRRRSRKKP) are enriched in basic residues. Residue serine 481 is modified to Phosphoserine. Glycyl lysine isopeptide (Lys-Gly) (interchain with G-Cter in SUMO2) cross-links involve residues lysine 559, lysine 644, lysine 659, and lysine 729. The segment at 653–714 (LAPGQEKSLA…PTSGLSQGPG (62 aa)) is disordered. ANK repeat units follow at residues 735–764 (FHPK…DPNF), 770–799 (SKRS…NIDT), 803–832 (DQRT…QVDP), 836–866 (EGST…DVNC), 870–899 (GGWT…DINI), 903–932 (EENI…DLHA), 936–965 (HGDS…DVTL), and 969–1002 (EGET…DKPV). The segment at 903 to 905 (EEN) is histone H3K9me binding. Serine 1046 is modified (phosphoserine). Residues 1058–1121 (QYCVCVDDCS…NCRNRVVQNG (64 aa)) enclose the Pre-SET domain. The Zn(2+) site is built by cysteine 1060, cysteine 1062, cysteine 1066, cysteine 1071, cysteine 1073, cysteine 1103, cysteine 1107, cysteine 1109, and cysteine 1113. One can recognise an SET domain in the interval 1124–1241 (ARLQLYRTQD…AGEQLGFDYG (118 aa)). S-adenosyl-L-methionine is bound by residues 1134–1136 (MGW), tyrosine 1171, and 1198–1199 (NH). The tract at residues 1160–1179 (DSEADVREEDSYLFDLDNKD) is interaction with histone H3. Residue cysteine 1201 participates in Zn(2+) binding. The interaction with histone H3 stretch occupies residues 1240-1243 (YGER). Cysteine 1254 is a Zn(2+) binding site. Arginine 1255 lines the S-adenosyl-L-methionine pocket. The Zn(2+) site is built by cysteine 1256 and cysteine 1261. Residues 1271-1296 (RQASAAQEPQENGLPDTSSAAAADPL) form a disordered region.

Belongs to the class V-like SAM-binding methyltransferase superfamily. Interacts with WIZ. Part of the E2F6.com-1 complex in G0 phase composed of E2F6, MGA, MAX, TFDP1, CBX3, BAT8, EHMT1, RING1, RNF2, MBLR, L3MBTL2 and YAF2. Interacts with MPHOSPH8. Interacts with CDYL. Interacts with REST only in the presence of CDYL. Part of a complex containing at least CDYL, REST, WIZ, SETB1, EHMT1 and EHMT2. Heterodimer; heterodimerizes with EHMT2. Interacts (via ANK repeats) with RELA (when monomethylated at 'Lys-310'). Interacts with Baz2b. In terms of tissue distribution, ubiquitous.

It is found in the nucleus. The protein localises to the chromosome. The catalysed reaction is N(6)-methyl-L-lysyl(9)-[histone H3] + S-adenosyl-L-methionine = N(6),N(6)-dimethyl-L-lysyl(9)-[histone H3] + S-adenosyl-L-homocysteine + H(+). It catalyses the reaction L-lysyl(9)-[histone H3] + S-adenosyl-L-methionine = N(6)-methyl-L-lysyl(9)-[histone H3] + S-adenosyl-L-homocysteine + H(+). Its activity is regulated as follows. Methyltransferase activity is inhibited by BIX-01294. Efficiently inhibited by compound E72, a BIX-01294 derivative in which the diazepane ring and the benzyl are replaced with a 3-dimethylaminopropyl and a 5-aminopentyl group at sites B and C, respectively. Its function is as follows. Histone methyltransferase that specifically mono- and dimethylates 'Lys-9' of histone H3 (H3K9me1 and H3K9me2, respectively) in euchromatin. H3K9me represents a specific tag for epigenetic transcriptional repression by recruiting HP1 proteins to methylated histones. Also weakly methylates 'Lys-27' of histone H3 (H3K27me). Also required for DNA methylation, the histone methyltransferase activity is not required for DNA methylation, suggesting that these 2 activities function independently. Probably targeted to histone H3 by different DNA-binding proteins like E2F6, MGA, MAX and/or DP1. During G0 phase, it probably contributes to silencing of MYC- and E2F-responsive genes, suggesting a role in G0/G1 transition in cell cycle. In addition to the histone methyltransferase activity, also methylates non-histone proteins: mediates dimethylation of 'Lys-373' of p53/TP53. Represses the expression of mitochondrial function-related genes, perhaps by occupying their promoter regions, working in concert with probable chromatin reader Baz2b. The polypeptide is Histone-lysine N-methyltransferase EHMT1 (Ehmt1) (Mus musculus (Mouse)).